A 537-amino-acid polypeptide reads, in one-letter code: Cytochrome P450 monooxygenase claR (537 aa).

A helical membrane pass occupies residues Val-23 to Ile-43. Cys-454 is a heme binding site.

Belongs to the cytochrome P450 family. Heme is required as a cofactor.

It is found in the membrane. The enzyme catalyses (2E)-geranylhydroquinone + reduced [NADPH--hemoprotein reductase] + O2 = wigandol + oxidized [NADPH--hemoprotein reductase] + 2 H2O + H(+). Its pathway is secondary metabolite biosynthesis; terpenoid biosynthesis. In terms of biological role, cytochrome P450 monooxygenase; part of the gene cluster that mediates the biosynthesis of clavilactone A, a meroterpenoid that features a unique benzo-fused ten-membered carbocyclic ring unit with an alpha,beta-epoxy-gamma-lactone moiety, forming an intriguing 10/5/3 tricyclic nested skeleton. ClaR, ClaS and ClaT are sufficient to produce clavilactone A. ClaR acts as a macrocyclase to catalyze the oxidative cyclization of the isopentenyl to the nonterpenoid moieties to form the benzo-fused macrocycle, leading to wigantol. The biosynthesis begins with the prenyltransferase claS that transfers geranyl pyrophosphate (GPP) to hydroquinone to produces geranylhydroquinone. The cytochrome P450 monooxygenase claR then catalyzes the diradical coupling reaction between the intramolecular hydroquinone and allyl moieties to form the benzo-fused ten-membered carbocyclic ring unit of wigantol. Finally the cytochrome P450 monooxygenase claT exquisitely and stereoselectively assembles the alpha,beta-epoxy-gamma-lactone moiety, producing clavilactone A via arnebinol A. In Ampulloclitocybe clavipes (Club foot), this protein is Cytochrome P450 monooxygenase claR.